A 738-amino-acid polypeptide reads, in one-letter code: Squalene hopane cyclase afumA (738 aa).

PFTB repeat units lie at residues 132-173 (GSQY…RIIG) and 321-361 (RRRC…KLHD). D460 functions as the Proton donor in the catalytic mechanism. PFTB repeat units follow at residues 482-523 (VRDA…ESLC), 581-621 (CARA…QYFK), and 634-675 (AARA…SQTA).

This sequence belongs to the terpene cyclase/mutase family.

It functions in the pathway secondary metabolite biosynthesis. Its function is as follows. Squalene hopane cyclase; part of the gene cluster that mediates the biosynthesis fumihopaside A, a hopane-type glucoside that enhances the thermotolerance and UV resistance of N.fumigata. The first step of fumihopaside A biosynthesis is performed by the squalene hopane cyclase afumA that catalyzes the cyclization of 3S-oxidosqualene into the hopene 21-beta-H-hopane-3-beta,22-diol. The cytochrome P450 monooxygenase afumB is responsible for both hydroxylation at C-24 and oxidations at C-30 of the afumA product. The glycosyltransferase afumC then catalyzes the glycosylation at C-24, using UDP-D-glucose as a donor, to produce fumihopaside A. AfumC is also able to accept UDP-D-galactose and UDP-D-glucuronic acid as donors to yield minor derivatives. Fumihopaside B, another minor derivative produced, is different from fumihopaside A due to the presence of a double bond between C-22 and C-29. The polypeptide is Squalene hopane cyclase afumA (Aspergillus fumigatus (strain CBS 144.89 / FGSC A1163 / CEA10) (Neosartorya fumigata)).